Consider the following 85-residue polypeptide: YcgL domain-containing protein ECA2367 (85 aa).

Residues methionine 1–valine 85 enclose the YcgL domain.

This Pectobacterium atrosepticum (strain SCRI 1043 / ATCC BAA-672) (Erwinia carotovora subsp. atroseptica) protein is YcgL domain-containing protein ECA2367.